The chain runs to 97 residues: DNA-binding protein NEQ150 (97 aa).

This sequence belongs to the PDCD5 family.

In Nanoarchaeum equitans (strain Kin4-M), this protein is DNA-binding protein NEQ150.